We begin with the raw amino-acid sequence, 261 residues long: Carbonic anhydrase 1 (261 aa).

Residue A2 is modified to N-acetylalanine. The Alpha-carbonic anhydrase domain maps to 4-261; the sequence is PDWGYDGENG…LNGRTVKASF (258 aa). Catalysis depends on H65, which acts as the Proton donor/acceptor. Positions 95, 97, and 120 each coordinate Zn(2+). Substrate is bound by residues T200 and 200 to 201; that span reads TH.

Belongs to the alpha-carbonic anhydrase family. The cofactor is Zn(2+).

It localises to the cytoplasm. It carries out the reaction hydrogencarbonate + H(+) = CO2 + H2O. The enzyme catalyses urea = cyanamide + H2O. Its activity is regulated as follows. Inhibited by acetazolamide. Functionally, catalyzes the reversible hydration of carbon dioxide. Can hydrate cyanamide to urea. This is Carbonic anhydrase 1 (CA1) from Bos taurus (Bovine).